A 543-amino-acid chain; its full sequence is Lipoyl synthase, apicoplast (543 aa).

Residues methionine 1–serine 63 form the signal peptide. 7 residues coordinate [4Fe-4S] cluster: cysteine 252, cysteine 257, cysteine 263, cysteine 278, cysteine 282, cysteine 285, and serine 493. The Radical SAM core domain occupies tryptophan 264 to lysine 482.

This sequence belongs to the radical SAM superfamily. Lipoyl synthase family. [4Fe-4S] cluster is required as a cofactor.

The protein localises to the plastid. It is found in the apicoplast. The catalysed reaction is [[Fe-S] cluster scaffold protein carrying a second [4Fe-4S](2+) cluster] + N(6)-octanoyl-L-lysyl-[protein] + 2 oxidized [2Fe-2S]-[ferredoxin] + 2 S-adenosyl-L-methionine + 4 H(+) = [[Fe-S] cluster scaffold protein] + N(6)-[(R)-dihydrolipoyl]-L-lysyl-[protein] + 4 Fe(3+) + 2 hydrogen sulfide + 2 5'-deoxyadenosine + 2 L-methionine + 2 reduced [2Fe-2S]-[ferredoxin]. The protein operates within protein modification; protein lipoylation via endogenous pathway; protein N(6)-(lipoyl)lysine from octanoyl-[acyl-carrier-protein]: step 2/2. Functionally, catalyzes the radical-mediated insertion of two sulfur atoms into the C-6 and C-8 positions of the octanoyl moiety bound to the lipoyl domains of lipoate-dependent enzymes, thereby converting the octanoylated domains into lipoylated derivatives. In Toxoplasma gondii, this protein is Lipoyl synthase, apicoplast.